A 274-amino-acid chain; its full sequence is Diaminopimelate epimerase (274 aa).

Residues asparagine 11, glutamine 44, and asparagine 64 each coordinate substrate. Residue cysteine 73 is the Proton donor of the active site. Substrate contacts are provided by residues 74 to 75, asparagine 157, asparagine 190, and 208 to 209; these read GN and ER. Cysteine 217 serves as the catalytic Proton acceptor. 218–219 contributes to the substrate binding site; it reads GS.

The protein belongs to the diaminopimelate epimerase family. Homodimer.

The protein resides in the cytoplasm. It catalyses the reaction (2S,6S)-2,6-diaminopimelate = meso-2,6-diaminopimelate. It participates in amino-acid biosynthesis; L-lysine biosynthesis via DAP pathway; DL-2,6-diaminopimelate from LL-2,6-diaminopimelate: step 1/1. In terms of biological role, catalyzes the stereoinversion of LL-2,6-diaminopimelate (L,L-DAP) to meso-diaminopimelate (meso-DAP), a precursor of L-lysine and an essential component of the bacterial peptidoglycan. The sequence is that of Diaminopimelate epimerase from Histophilus somni (strain 2336) (Haemophilus somnus).